The primary structure comprises 446 residues: T-box transcription factor TBX19 (446 aa).

A DNA-binding region (T-box) is located at residues Leu-43–Asp-216.

The protein localises to the nucleus. Transcriptional regulator involved in developmental processes. Can activate POMC gene expression and repress the alpha glycoprotein subunit and thyroid-stimulating hormone beta promoters. This chain is T-box transcription factor TBX19, found in Mus musculus (Mouse).